A 128-amino-acid chain; its full sequence is Otoraplin (128 aa).

The signal sequence occupies residues 1 to 18; it reads MARILILLLGGLVVLCAG. 2 cysteine pairs are disulfide-bonded: Cys32-Cys37 and Cys55-Cys127. The 72-residue stretch at 39-110 folds into the SH3 domain; sequence YTISLARAQE…PSNLVKEQRV (72 aa).

It belongs to the MIA/OTOR family. Highly expressed in cochlea.

It localises to the secreted. In Mus musculus (Mouse), this protein is Otoraplin (Otor).